The following is a 99-amino-acid chain: NADH-quinone oxidoreductase subunit K (99 aa).

The next 3 membrane-spanning stretches (helical) occupy residues 3-23 (LVNY…TVLV), 28-48 (IIMF…FVAF), and 59-79 (VVAF…LAII).

This sequence belongs to the complex I subunit 4L family. In terms of assembly, NDH-1 is composed of 14 different subunits. Subunits NuoA, H, J, K, L, M, N constitute the membrane sector of the complex.

It localises to the cell membrane. The enzyme catalyses a quinone + NADH + 5 H(+)(in) = a quinol + NAD(+) + 4 H(+)(out). Functionally, NDH-1 shuttles electrons from NADH, via FMN and iron-sulfur (Fe-S) centers, to quinones in the respiratory chain. The immediate electron acceptor for the enzyme in this species is believed to be a menaquinone. Couples the redox reaction to proton translocation (for every two electrons transferred, four hydrogen ions are translocated across the cytoplasmic membrane), and thus conserves the redox energy in a proton gradient. In Beutenbergia cavernae (strain ATCC BAA-8 / DSM 12333 / CCUG 43141 / JCM 11478 / NBRC 16432 / NCIMB 13614 / HKI 0122), this protein is NADH-quinone oxidoreductase subunit K.